The sequence spans 161 residues: Large ribosomal subunit protein uL16 (161 aa).

Residues 140 to 161 (LNKGNYKPAKTPVTADDSESSS) are disordered.

It belongs to the universal ribosomal protein uL16 family. Part of the 50S ribosomal subunit.

Binds 23S rRNA and is also seen to make contacts with the A and possibly P site tRNAs. This Prochlorococcus marinus (strain NATL2A) protein is Large ribosomal subunit protein uL16.